A 360-amino-acid chain; its full sequence is S-adenosylmethionine:tRNA ribosyltransferase-isomerase (360 aa).

It belongs to the QueA family. As to quaternary structure, monomer.

Its subcellular location is the cytoplasm. The enzyme catalyses 7-aminomethyl-7-carbaguanosine(34) in tRNA + S-adenosyl-L-methionine = epoxyqueuosine(34) in tRNA + adenine + L-methionine + 2 H(+). It functions in the pathway tRNA modification; tRNA-queuosine biosynthesis. In terms of biological role, transfers and isomerizes the ribose moiety from AdoMet to the 7-aminomethyl group of 7-deazaguanine (preQ1-tRNA) to give epoxyqueuosine (oQ-tRNA). The sequence is that of S-adenosylmethionine:tRNA ribosyltransferase-isomerase from Nitrobacter winogradskyi (strain ATCC 25391 / DSM 10237 / CIP 104748 / NCIMB 11846 / Nb-255).